A 458-amino-acid chain; its full sequence is MSCICLKNEKLNVINQVKRFIKKYCKSTQPLLLALSGGADSLSLFYCLLACRLEGILSFHVAHVDHGWREESAKEATILKNLAEQHQVPYHQLKIDLSQLAGNLEDACRKQRQKFFKEICLQNNLQAVCLGHQENDQVETVLKRILEGSHWSHFDGLKERMWHDQVQFLRPLLGIQKDEILAFLKGNQLKAFEDGTNCDERFMRARMRRTIIPDLNRSFGKKIDNSLVYIASEMSELKNFFLGRVSPLLGQIVKGPFGVYLNLANHPSIDLVEIKYLLRLISEQELFFLSRQILQRASEAIEKLEPQLSFEMGTKKIVIDRGHFFILSKKTACKNPNLQISGSSLQYYGKWMIKTNESFYHQNLQASTWLDGWRGYLKTYLPLDKYVLGQASKHAKLLRHHSTINKWWSSHHVPPFLRSFFPVIWQHNEIAHEFLTGLERQNLQEGEKCLQIELSYLT.

36–41 (SGGADS) contacts ATP.

The protein belongs to the tRNA(Ile)-lysidine synthase family.

Its subcellular location is the cytoplasm. The catalysed reaction is cytidine(34) in tRNA(Ile2) + L-lysine + ATP = lysidine(34) in tRNA(Ile2) + AMP + diphosphate + H(+). Functionally, ligates lysine onto the cytidine present at position 34 of the AUA codon-specific tRNA(Ile) that contains the anticodon CAU, in an ATP-dependent manner. Cytidine is converted to lysidine, thus changing the amino acid specificity of the tRNA from methionine to isoleucine. This chain is tRNA(Ile)-lysidine synthase, found in Protochlamydia amoebophila (strain UWE25).